The chain runs to 431 residues: MAQFYSAKRRVTTRQIITVKVNDLDSFGQGVARHNGKALFIPGLLPEESAEVIITEDKKQFARARVSRRLNDSPERETPRCPHFGVCGGCQQQHVSIALQQRSKSAALARLMKHEVNDIIAGAPWGYRRRARLSLNCPPDKPLQMGFRKAGSSDIVNVEQCPVLAPQLAALLPRIRACLASLHGTRHLGHVELVQAGSGTLMILRHTAPLSAADKEKLERFSHSEGLSLFLAPFSEILETVSGEAPWYDSHGLRLAFSPRDFIQVNEAVNQQMVARALEWLDVRAEDRVLDLFCGMGNFTLPLATRAASVIGVEGVPALVEKGRENAIRNGLHNVTFFHENLEEDVTKQPWAKNGFDKVLLDPARAGATGVMRHIIKLKPIRIVYVSCNPATLARDSEALVNAGYEVTRLAMLDMFPHTGHLESMVLFERM.

Residues 10-68 (RVTTRQIITVKVNDLDSFGQGVARHNGKALFIPGLLPEESAEVIITEDKKQFARARVSR) enclose the TRAM domain. Cysteine 81, cysteine 87, cysteine 90, and cysteine 161 together coordinate [4Fe-4S] cluster. S-adenosyl-L-methionine is bound by residues glutamine 264, phenylalanine 293, asparagine 298, glutamate 314, asparagine 341, and aspartate 362. Residue cysteine 388 is the Nucleophile of the active site.

Belongs to the class I-like SAM-binding methyltransferase superfamily. RNA M5U methyltransferase family. RlmD subfamily.

It carries out the reaction uridine(1939) in 23S rRNA + S-adenosyl-L-methionine = 5-methyluridine(1939) in 23S rRNA + S-adenosyl-L-homocysteine + H(+). Functionally, catalyzes the formation of 5-methyl-uridine at position 1939 (m5U1939) in 23S rRNA. The protein is 23S rRNA (uracil(1939)-C(5))-methyltransferase RlmD of Salmonella typhimurium (strain LT2 / SGSC1412 / ATCC 700720).